Reading from the N-terminus, the 304-residue chain is MIVVLIGALSIDIIFGEPKEYIHPVVFSGRVASAIEGYFRKFDNRFRAGILFSIAVIVLTAIPYFLAVYLSSFILVVYVVVSMVILKTTFSITSMGEHIKLITDSLKKGNIMEARMHLSMIVRRDTSRLNENEISSAAIESIAEGLVDGYITPLFFFVFFGLPGAFIARIINTLDSMYGYKDRKNFEFGRFSAFMDTVINYIPARISWFFITFSSDILNYRSKAIPVRRYIRRFDSVNAGWPIASMASALNLRLEKKGHYIVNDDGYQPGVADIEKSMKIYYLAAYSYIVIFVLPLLVIMAVFL.

5 helical membrane-spanning segments follow: residues 2-22, 50-70, 73-93, 147-167, and 284-304; these read IVVL…KEYI, ILFS…AVYL, FILV…FSIT, VDGY…GAFI, and AAYS…AVFL.

Belongs to the CobD/CbiB family.

It localises to the cell membrane. It functions in the pathway cofactor biosynthesis; adenosylcobalamin biosynthesis. Converts cobyric acid to cobinamide by the addition of aminopropanol on the F carboxylic group. The polypeptide is Probable cobalamin biosynthesis protein CobD (Thermoplasma volcanium (strain ATCC 51530 / DSM 4299 / JCM 9571 / NBRC 15438 / GSS1)).